Consider the following 480-residue polypeptide: Proline--tRNA ligase (480 aa).

Belongs to the class-II aminoacyl-tRNA synthetase family. ProS type 3 subfamily. Homodimer.

The protein resides in the cytoplasm. It carries out the reaction tRNA(Pro) + L-proline + ATP = L-prolyl-tRNA(Pro) + AMP + diphosphate. In terms of biological role, catalyzes the attachment of proline to tRNA(Pro) in a two-step reaction: proline is first activated by ATP to form Pro-AMP and then transferred to the acceptor end of tRNA(Pro). The polypeptide is Proline--tRNA ligase (Mycobacterium leprae (strain Br4923)).